The chain runs to 483 residues: Wax ester synthase/diacylglycerol acyltransferase 10 (483 aa).

At 1 to 203 (MTKEEVEEEP…SINAVYYAVR (203 aa)) the chain is on the cytoplasmic side. H143 functions as the Proton acceptor in the catalytic mechanism. Residues 204–222 (LIWNTIVDLLLLWATSLFF) form a helical membrane-spanning segment. The Lumenal segment spans residues 223 to 483 (KDTETPISEG…MKDTLSGKSD (261 aa)). Residues N394 and N399 are each glycosylated (N-linked (GlcNAc...) asparagine).

In the N-terminal section; belongs to the long-chain O-acyltransferase family. As to expression, mostly expressed in roots.

The protein localises to the cell membrane. The protein resides in the endoplasmic reticulum membrane. It carries out the reaction an acyl-CoA + a 1,2-diacyl-sn-glycerol = a triacyl-sn-glycerol + CoA. The catalysed reaction is a long chain fatty alcohol + a fatty acyl-CoA = a wax ester + CoA. It functions in the pathway glycerolipid metabolism; triacylglycerol biosynthesis. It participates in lipid metabolism. In terms of biological role, bifunctional wax ester synthase/diacylglycerol acyltransferase. Involved in cuticular wax biosynthesis. In Arabidopsis thaliana (Mouse-ear cress), this protein is Wax ester synthase/diacylglycerol acyltransferase 10.